The chain runs to 167 residues: Leukotoxin-activating lysine-acyltransferase LktC serotype A11 (167 aa).

Active-site residues include H22 and D91.

This sequence belongs to the RTX toxin acyltransferase family.

The protein localises to the cytoplasm. It carries out the reaction a fatty acyl-[ACP] + L-lysyl-[protein] = N(6)-(fatty acyl)-L-lysyl-[protein] + holo-[ACP] + H(+). In terms of biological role, involved in fatty acylation of the protoxin (LktA) at two internal lysine residues, thereby converting it to the active toxin. The polypeptide is Leukotoxin-activating lysine-acyltransferase LktC serotype A11 (lktC) (Mannheimia haemolytica (Pasteurella haemolytica)).